A 293-amino-acid polypeptide reads, in one-letter code: Probable xyloglucan endotransglucosylase/hydrolase protein 5 (293 aa).

Positions 1–21 are cleaved as a signal peptide; the sequence is MGRLSSTLCLTFLILATVAFG. A GH16 domain is found at 23-220; the sequence is PPKKSINVPF…WEKAPFVASY (198 aa). Residue glutamate 106 is the Nucleophile of the active site. The Proton donor role is filled by glutamate 110. Residue glutamate 110 coordinates xyloglucan. Residue asparagine 114 is glycosylated (N-linked (GlcNAc...) asparagine). Xyloglucan is bound by residues 123 to 125, 133 to 135, 199 to 200, and glycine 204; these read QTN, NRE, and DW. Disulfide bonds link cysteine 228–cysteine 237 and cysteine 274–cysteine 287. Arginine 279 is a xyloglucan binding site.

The protein belongs to the glycosyl hydrolase 16 family. XTH group 1 subfamily. Post-translationally, contains at least one intrachain disulfide bond essential for its enzymatic activity. Root specific.

The protein localises to the secreted. It localises to the cell wall. The protein resides in the extracellular space. It is found in the apoplast. The catalysed reaction is breaks a beta-(1-&gt;4) bond in the backbone of a xyloglucan and transfers the xyloglucanyl segment on to O-4 of the non-reducing terminal glucose residue of an acceptor, which can be a xyloglucan or an oligosaccharide of xyloglucan.. Its function is as follows. Catalyzes xyloglucan endohydrolysis (XEH) and/or endotransglycosylation (XET). Cleaves and religates xyloglucan polymers, an essential constituent of the primary cell wall, and thereby participates in cell wall construction of growing tissues. In Arabidopsis thaliana (Mouse-ear cress), this protein is Probable xyloglucan endotransglucosylase/hydrolase protein 5 (XTH5).